The chain runs to 346 residues: MKTYNVAIVGASGAVGQELIKGLENSFFPIKKFVPLASTRSAGKKIKAFNKDYEILETTHEVFEREKIDIAFFSAGGSVSEEFATSASKTALVVDNTSFFRLNKDVPLVVPEINAKEIFNAPLNIIANPNCSTIQMTQILNPLHLHFKIKSVIVSTYQAVSGAGNKGIESLKNELKTALECLEKDPTIDLNQVLQAGAFAYPIAFNAIAHIDTFKENGYTKEELKMLHETHKIMGVDFPISATCVRVPVLRSHSESLSIAFEKEFDLKEVYEVLKNAPSVAVCDDPSHNLYPTPLKASHTDSVFIGRLRKDLFDKKTLHGFCVADQLRVGAATNALKIALHYIKNA.

NADP(+) is bound by residues 12-15 (SGAV) and 40-41 (RS). Arg-101 contributes to the phosphate binding site. Cys-131 acts as the Acyl-thioester intermediate in catalysis. Position 158 (Gln-158) interacts with substrate. Residue 161–162 (SG) participates in NADP(+) binding. Lys-225 serves as a coordination point for phosphate. Arg-246 is a substrate binding site. His-253 functions as the Proton acceptor in the catalytic mechanism. Gln-326 provides a ligand contact to NADP(+).

The protein belongs to the aspartate-semialdehyde dehydrogenase family. In terms of assembly, homodimer.

It carries out the reaction L-aspartate 4-semialdehyde + phosphate + NADP(+) = 4-phospho-L-aspartate + NADPH + H(+). It functions in the pathway amino-acid biosynthesis; L-lysine biosynthesis via DAP pathway; (S)-tetrahydrodipicolinate from L-aspartate: step 2/4. The protein operates within amino-acid biosynthesis; L-methionine biosynthesis via de novo pathway; L-homoserine from L-aspartate: step 2/3. Its pathway is amino-acid biosynthesis; L-threonine biosynthesis; L-threonine from L-aspartate: step 2/5. In terms of biological role, catalyzes the NADPH-dependent formation of L-aspartate-semialdehyde (L-ASA) by the reductive dephosphorylation of L-aspartyl-4-phosphate. The chain is Aspartate-semialdehyde dehydrogenase from Helicobacter pylori (strain ATCC 700392 / 26695) (Campylobacter pylori).